The chain runs to 159 residues: Endoribonuclease YbeY (159 aa).

Residues His120, His124, and His130 each coordinate Zn(2+).

Belongs to the endoribonuclease YbeY family. Zn(2+) serves as cofactor.

The protein localises to the cytoplasm. Its function is as follows. Single strand-specific metallo-endoribonuclease involved in late-stage 70S ribosome quality control and in maturation of the 3' terminus of the 16S rRNA. The sequence is that of Endoribonuclease YbeY from Parafrankia sp. (strain EAN1pec).